A 442-amino-acid polypeptide reads, in one-letter code: DDB1- and CUL4-associated factor 12-B (442 aa).

Positions 1 to 13 are enriched in basic residues; that stretch reads MTRRPVSRKRRAT. The disordered stretch occupies residues 1 to 31; that stretch reads MTRRPVSRKRRATHGTGPGEQSDWDHSAHKR. WD repeat units lie at residues 132-173, 177-215, 245-284, and 333-370; these read SHQS…PVCV, GHND…VNKR, PVNC…SKLL, and EQGS…FLED.

It belongs to the WD repeat DCAF12 family. Component of the DCX(DCAF12) E3 ubiquitin ligase complex, at least composed of cul4 (cul4a or cul4b), ddb1, dcaf12 and rbx1.

The protein resides in the cytoplasm. Its subcellular location is the cytoskeleton. The protein localises to the microtubule organizing center. It localises to the centrosome. It is found in the nucleus. It functions in the pathway protein modification; protein ubiquitination. Its function is as follows. Substrate-recognition component of a DCX (DDB1-CUL4-X-box) E3 ubiquitin-protein ligase complex of the DesCEND (destruction via C-end degrons) pathway, which recognizes a C-degron located at the extreme C terminus of target proteins, leading to their ubiquitination and degradation. The C-degron recognized by the DesCEND pathway is usually a motif of less than ten residues and can be present in full-length proteins, truncated proteins or proteolytically cleaved forms. The DCX(DCAF12) complex specifically recognizes proteins with a diglutamate (Glu-Glu) at the C-terminus leading to their ubiquitination and degradation. Also directly recognizes the C-terminal glutamate-leucine (Glu-Leu) degron as an alternative degron in proteins leading to their ubiquitination and degradation. The sequence is that of DDB1- and CUL4-associated factor 12-B (dcaf12-b) from Xenopus laevis (African clawed frog).